The primary structure comprises 58 residues: MPPCLTTWLSQLLKDNSYPLVLGPKNFGATPNKSNNHAHYYNHPNPDFPNSPHPYHPR.

The disordered stretch occupies residues 27–58; it reads FGATPNKSNNHAHYYNHPNPDFPNSPHPYHPR. Residues 35-45 show a composition bias toward low complexity; that stretch reads NNHAHYYNHPN. A compositionally biased stretch (pro residues) spans 46–58; it reads PDFPNSPHPYHPR.

Interacts with IMMT/mitofilin. In terms of tissue distribution, detected in cerebrospinal fluid (at protein level).

It is found in the mitochondrion. Its subcellular location is the nucleus. In terms of biological role, increases neural cell metabolic activity and mitochondrial oxygen consumption rate. The polypeptide is Protein SHMOOSE (Homo sapiens (Human)).